The chain runs to 379 residues: Alternative oxidase 1, mitochondrial (379 aa).

Residues 33–50 (TTTTSTKSRSSTSTAATT) are compositionally biased toward low complexity. Positions 33 to 76 (TTTTSTKSRSSTSTAATTVGNSNPKSPIDEDNLEKPGTIPTKHK) are disordered. Residues Glu-180, Glu-219, and His-222 each contribute to the Fe cation site. A helical membrane pass occupies residues 234–256 (WFTRSIIYIGQGVFTNIFFLVYL). Fe cation contacts are provided by Glu-270, Glu-271, Glu-326, and His-329.

Belongs to the alternative oxidase family. Requires Fe cation as cofactor.

It localises to the mitochondrion inner membrane. Catalyzes cyanide-resistant oxygen consumption. May increase respiration when the cytochrome respiratory pathway is restricted, or in response to low temperatures. In Candida albicans (Yeast), this protein is Alternative oxidase 1, mitochondrial (AOX1).